A 353-amino-acid polypeptide reads, in one-letter code: MASQTLVVFQASNQSQLPPPNATLCDGAQEAWHLLHKVLPTCVVAICSGGLLGNLFVLSVFLVPRRRLNAAEIYLAHLAASDLVFALGLPFWAETIRNGFHWPFGAPLCRVVNGVIKANLFISIFLVVAISRDRYRALVHPVASWRRRRRRHWAQATCVLIWTAGGLLSIPTFLLRSVQVVPELNVSACVLPFPHEAWAFVRTVELNVLGFLLPLAAILFFNYHILAALRGREQLSRTRCGGPRDGKTTALILTLVAVFLLCWTPYHVCAFLEFLLHVRAIRGCFWEDFTDLGLQYTNFFAFINSCLNPVIYVFWGQLFRTKIWELYHRCLPRKLTAVSSSRRKEIFQIFWRN.

Residues 1–41 (MASQTLVVFQASNQSQLPPPNATLCDGAQEAWHLLHKVLPT) lie on the Extracellular side of the membrane. N-linked (GlcNAc...) asparagine glycosylation is found at Asn13 and Asn21. Residues 42–62 (CVVAICSGGLLGNLFVLSVFL) form a helical membrane-spanning segment. The Cytoplasmic segment spans residues 63–72 (VPRRRLNAAE). Residues 73–93 (IYLAHLAASDLVFALGLPFWA) traverse the membrane as a helical segment. The Extracellular portion of the chain corresponds to 94-110 (ETIRNGFHWPFGAPLCR). A disulfide bridge links Cys109 with Cys189. The helical transmembrane segment at 111–131 (VVNGVIKANLFISIFLVVAIS) threads the bilayer. Residues 132–154 (RDRYRALVHPVASWRRRRRRHWA) lie on the Cytoplasmic side of the membrane. The helical transmembrane segment at 155 to 175 (QATCVLIWTAGGLLSIPTFLL) threads the bilayer. Over 176–207 (RSVQVVPELNVSACVLPFPHEAWAFVRTVELN) the chain is Extracellular. Asn185 carries N-linked (GlcNAc...) asparagine glycosylation. The helical transmembrane segment at 208–228 (VLGFLLPLAAILFFNYHILAA) threads the bilayer. The Cytoplasmic portion of the chain corresponds to 229–251 (LRGREQLSRTRCGGPRDGKTTAL). A helical membrane pass occupies residues 252–272 (ILTLVAVFLLCWTPYHVCAFL). At 273 to 295 (EFLLHVRAIRGCFWEDFTDLGLQ) the chain is on the extracellular side. Residues 296-316 (YTNFFAFINSCLNPVIYVFWG) traverse the membrane as a helical segment. Residues 317-353 (QLFRTKIWELYHRCLPRKLTAVSSSRRKEIFQIFWRN) lie on the Cytoplasmic side of the membrane. The S-palmitoyl cysteine moiety is linked to residue Cys330.

The protein belongs to the G-protein coupled receptor 1 family. Bradykinin receptor subfamily. BDKRB1 sub-subfamily.

Its subcellular location is the cell membrane. This is a receptor for bradykinin. Could be a factor in chronic pain and inflammation. The chain is B1 bradykinin receptor (BDKRB1) from Sus scrofa (Pig).